The sequence spans 489 residues: Major aspartyl peptidase 1 (489 aa).

The N-terminal stretch at methionine 1 to alanine 16 is a signal peptide. In terms of domain architecture, Peptidase A1 spans tyrosine 101 to alanine 432. The active site involves aspartate 119. Glycine 121 contributes to the pepstatin A binding site. Cysteine 132 and cysteine 137 are joined by a disulfide. Residues threonine 161, glycine 163, and serine 164 each contribute to the pepstatin A site. Residue asparagine 266 is glycosylated (N-linked (GlcNAc...) asparagine). Position 286 (tyrosine 286) interacts with pepstatin A. Aspartate 317 is a catalytic residue. Threonine 320 and threonine 321 together coordinate pepstatin A. A disulfide bond links cysteine 357 and cysteine 391. The interval alanine 442–alanine 466 is disordered. Residues threonine 450–serine 463 are compositionally biased toward gly residues. Positions glycine 456–isoleucine 489 are cleaved as a propeptide — removed at pH 5.0; by autocatalysis.

This sequence belongs to the peptidase A1 family. Monomer. In terms of processing, activated by the autocatalytic cleavage of the propeptide. Cleaved at the end of the propeptide promiscuously from residue 76 to residue 79. C-terminal cleavage by autocatalysis at Gly-456 at the pH optimum indicating a possible regulatory or other function of this propeptide.

The protein resides in the secreted. Its activity is regulated as follows. Activated by low pH. Inhibited by pepstatin A with an IC(50) of 1.4 nM. Inhibited by acetyl pepstatin. Inhibited by HIV antiretroviral therapy protease inhibitors including amprenavir and ritonavir. Inhibited by HIV-1 protease inhibitor brecanavir with an approximate IC(50) of 352 nM. Inhibited by HIV-1 protease inhibitors CGP53437 and GS-8374. From the tested peptidomimetic inhibitor molecules, macrocycles containing P2-P3' tethered side chains, statines in P1 and an alpha amino acid in P2' are the best. From the linear peptidomimetic inhibitors, the ones with a phenylstatine or hydroxyethylamine scissile bond isoster are better than compounds with a reduced bond or a homo-amide. Overall, inhibitors with a phenylalanine side chain, either unsubstituted or with a small substituent, is preferred in P1 while a bulkier P1 side chain leads to lower inhibition. Possesses prevalent extracellular endopeptidase activity at low pH condition. Required for high-density growth in acidic environments. Broad substrate specificity with preference cleavage of the peptide substrate between hydrophobic amino acids. Cleaves substrate at P1-P1' between Phe-Leu. Positively charged amino acids are preferred at P2. Prefers hydrophobic amino acids at the P3 and P4 positions. Cleaves substrate also at P1'-P2' between Leu-Val to some degree. Required for virulence in mouse inhalation model of infection. This chain is Major aspartyl peptidase 1, found in Cryptococcus neoformans var. grubii serotype A (strain H99 / ATCC 208821 / CBS 10515 / FGSC 9487) (Filobasidiella neoformans var. grubii).